The sequence spans 328 residues: D-cysteine desulfhydrase (328 aa).

An N6-(pyridoxal phosphate)lysine modification is found at Lys-51.

Belongs to the ACC deaminase/D-cysteine desulfhydrase family. In terms of assembly, homodimer. Pyridoxal 5'-phosphate is required as a cofactor.

It carries out the reaction D-cysteine + H2O = hydrogen sulfide + pyruvate + NH4(+) + H(+). Its function is as follows. Catalyzes the alpha,beta-elimination reaction of D-cysteine and of several D-cysteine derivatives. It could be a defense mechanism against D-cysteine. The polypeptide is D-cysteine desulfhydrase (Salmonella paratyphi B (strain ATCC BAA-1250 / SPB7)).